The sequence spans 206 residues: Transmembrane emp24 domain-containing protein bai (206 aa).

Residues 1–20 (MLKVLYVIFTIFGYIWPIYS) form the signal peptide. Over 21-172 (VMFHLTPNTQ…RDTNEKTNSR (152 aa)) the chain is Lumenal. The 111-residue stretch at 30–140 (QKCLKEDIQA…LKPLEVDLKR (111 aa)) folds into the GOLD domain. Residues 173–193 (VLFFSIFSMCCLLGLATWQVL) form a helical membrane-spanning segment. Residues 194 to 206 (YLRRYFKAKKLIE) lie on the Cytoplasmic side of the membrane.

The protein belongs to the EMP24/GP25L family.

It is found in the membrane. Functionally, eca and bai are essential, though not redundant, for dorsoventral patterning of the embryo. Specifically required during early embryogenesis for the activity of maternal tkv, while the zygotic tkv is not affected. This Drosophila virilis (Fruit fly) protein is Transmembrane emp24 domain-containing protein bai.